The primary structure comprises 341 residues: Vacuolar morphogenesis protein 7 homolog (341 aa).

A PX domain is found at 1–115; the sequence is MALKIKIPET…KFLNIKDESE (115 aa). Residues 214 to 233 are compositionally biased toward low complexity; sequence NSPVAPPSASSQLNSSNPSS. The segment at 214–265 is disordered; that stretch reads NSPVAPPSASSQLNSSNPSSPFRPLSASTDKQSNTSLNRVLGKNRMPETQTT. Polar residues predominate over residues 239-251; it reads SASTDKQSNTSLN. Residues 278–340 form the t-SNARE coiled-coil homology domain; sequence NQTMEDQDMQ…HRTRAGLRKL (63 aa).

In terms of assembly, possibly multimeric.

Its subcellular location is the vacuole. Functionally, essential for proper morphogenesis of the vacuole. May exist as structural reinforcement on the surface of the vacuolar membrane and be required for maintenance against rupture by osmotic pressure. This Schizosaccharomyces pombe (strain 972 / ATCC 24843) (Fission yeast) protein is Vacuolar morphogenesis protein 7 homolog.